The sequence spans 1374 residues: Ribonuclease 3 (1374 aa).

Disordered regions lie at residues 1 to 95, 130 to 406, and 452 to 497; these read MMQG…PLPP, PPVP…EEEE, and LGSR…SSSS. The span at 59 to 68 shows a compositional bias: polar residues; the sequence is PSTTFSNSPA. Pro residues-rich tracts occupy residues 70–95 and 145–160; these read NFLP…PLPP and MMPP…PPVM. Over residues 182 to 202 the composition is skewed to low complexity; the sequence is FNSFQNNPSSFLPSANNSSSP. Composition is skewed to basic and acidic residues over residues 216–289 and 298–313; these read PSER…ERER and RRSP…EYKR. 2 positions are modified to phosphoserine: Ser-355 and Ser-373. The segment covering 364–399 has biased composition (basic and acidic residues); sequence RWEEEKDRWSDNQSSGKDKNYTSIKEKEPEETMPDK. The tract at residues 390-1365 is necessary for interaction with DGCR8 and pri-miRNA processing activity; the sequence is KEPEETMPDK…RWEREHQERE (976 aa). A compositionally biased stretch (acidic residues) spans 475–491; it reads EDLESSSESECESDEDS. Cys-536, Cys-538, His-549, Cys-561, His-609, Cys-676, and His-680 together coordinate Zn(2+). 2 consecutive RNase III domains span residues 876 to 1056 and 1107 to 1233; these read LMHL…LEGS and LTEF…IDKD. Glu-969 lines the Mg(2+) pocket. Zn(2+) is bound at residue His-1026. Residues Asn-1042, Glu-1045, Glu-1147, Asp-1219, and Glu-1222 each contribute to the Mg(2+) site. The region spanning 1260 to 1334 is the DRBM domain; it reads DPKSQLQQCC…AMDALEKYNF (75 aa).

Belongs to the ribonuclease III family. In terms of assembly, component of the microprocessor complex, or pri-miRNA processing protein complex, which is composed of DROSHA and DGCR8. The microprocessor complex is a heterotrimer; each of the two DROSHA RNase III domains binds one DGCR8 (via C-terminal region). Interacts with SP1 and SNIP1. Interacts with SRRT/ARS2. Interacts with CPSF3 and ISY1; this interaction is in an RNA dependent manner. Interacts with PUS10; interaction promotes pri-miRNAs processing. Requires Mg(2+) as cofactor. The cofactor is Mn(2+). Post-translationally, degraded by autophagy in response to neuronal activity in motor neurons. As to expression, ubiquitous.

Its subcellular location is the nucleus. The protein localises to the nucleolus. It localises to the cytoplasm. The enzyme catalyses Endonucleolytic cleavage to 5'-phosphomonoester.. Ribonuclease III double-stranded (ds) RNA-specific endoribonuclease that is involved in the initial step of microRNA (miRNA) biogenesis. Component of the microprocessor complex that is required to process primary miRNA transcripts (pri-miRNAs) to release precursor miRNA (pre-miRNA) in the nucleus. Within the microprocessor complex, DROSHA cleaves the 3' and 5' strands of a stem-loop in pri-miRNAs (processing center 11 bp from the dsRNA-ssRNA junction) to release hairpin-shaped pre-miRNAs that are subsequently cut by the cytoplasmic DICER to generate mature miRNAs. Involved also in pre-rRNA processing. Cleaves double-strand RNA and does not cleave single-strand RNA. Involved in the formation of GW bodies. Plays a role in growth homeostasis in response to autophagy in motor neurons. In Homo sapiens (Human), this protein is Ribonuclease 3 (DROSHA).